A 73-amino-acid polypeptide reads, in one-letter code: Toxin Td4 (73 aa).

The N-terminal stretch at 1 to 7 is a signal peptide; the sequence is IGMVVEC. The 63-residue stretch at 8–70 folds into the LCN-type CS-alpha/beta domain; sequence KDGYLVGNDG…TWDRATNRCG (63 aa). 4 disulfide bridges follow: cysteine 18–cysteine 69, cysteine 22–cysteine 44, cysteine 30–cysteine 50, and cysteine 34–cysteine 52. Arginine amide is present on arginine 71.

It belongs to the long (4 C-C) scorpion toxin superfamily. Sodium channel inhibitor family. Beta subfamily. Expressed by the venom gland.

The protein localises to the secreted. Its function is as follows. Beta toxins bind voltage-independently at site-4 of sodium channels (Nav) and shift the voltage of activation toward more negative potentials thereby affecting sodium channel activation and promoting spontaneous and repetitive firing. This is Toxin Td4 from Tityus discrepans (Venezuelan scorpion).